The following is a 433-amino-acid chain: UPF0597 protein Spea_0809 (433 aa).

It belongs to the UPF0597 family.

The protein is UPF0597 protein Spea_0809 of Shewanella pealeana (strain ATCC 700345 / ANG-SQ1).